A 58-amino-acid polypeptide reads, in one-letter code: Large ribosomal subunit protein bL32 (58 aa).

The protein belongs to the bacterial ribosomal protein bL32 family.

The protein is Large ribosomal subunit protein bL32 of Thermobifida fusca (strain YX).